The chain runs to 307 residues: Ribosomal RNA large subunit methyltransferase F (307 aa).

Belongs to the methyltransferase superfamily. METTL16/RlmF family.

Its subcellular location is the cytoplasm. It catalyses the reaction adenosine(1618) in 23S rRNA + S-adenosyl-L-methionine = N(6)-methyladenosine(1618) in 23S rRNA + S-adenosyl-L-homocysteine + H(+). Specifically methylates the adenine in position 1618 of 23S rRNA. The chain is Ribosomal RNA large subunit methyltransferase F from Bacteroides thetaiotaomicron (strain ATCC 29148 / DSM 2079 / JCM 5827 / CCUG 10774 / NCTC 10582 / VPI-5482 / E50).